We begin with the raw amino-acid sequence, 342 residues long: Muscleblind-like protein 3 (342 aa).

4 consecutive C3H1-type zinc fingers follow at residues 14–42, 48–74, 174–202, and 210–236; these read WLTL…HPPR, NGRV…HPPP, TDRL…HPTD, and DNSV…HPPP. The span at 316–326 shows a compositional bias: low complexity; the sequence is PSTVSTATPPA. Positions 316 to 342 are disordered; that stretch reads PSTVSTATPPASNVPYVPTTTGNQLKY. Positions 333 to 342 are enriched in polar residues; sequence PTTTGNQLKY.

It belongs to the muscleblind family.

It is found in the nucleus. It localises to the cytoplasm. Mediates pre-mRNA alternative splicing regulation. Acts either as activator or repressor of splicing on specific pre-mRNA targets. Inhibits cardiac troponin-T (TNNT2) pre-mRNA exon inclusion but induces insulin receptor (IR) pre-mRNA exon inclusion in muscle. Antagonizes the alternative splicing activity pattern of CELF proteins. Could inhibit terminal muscle differentiation, acting at approximately the time of myogenin induction. The chain is Muscleblind-like protein 3 (Mbnl3) from Mus musculus (Mouse).